We begin with the raw amino-acid sequence, 317 residues long: Malate dehydrogenase (317 aa).

NAD(+) is bound by residues 10–15 (GGGQIG) and Asp34. 2 residues coordinate substrate: Arg83 and Arg89. NAD(+)-binding positions include Asn96 and 119–121 (ISN). Asn121 and Arg152 together coordinate substrate. Catalysis depends on His176, which acts as the Proton acceptor.

Belongs to the LDH/MDH superfamily. MDH type 3 family.

The catalysed reaction is (S)-malate + NAD(+) = oxaloacetate + NADH + H(+). Catalyzes the reversible oxidation of malate to oxaloacetate. This chain is Malate dehydrogenase, found in Geobacter metallireducens (strain ATCC 53774 / DSM 7210 / GS-15).